Here is a 404-residue protein sequence, read N- to C-terminus: Glycosylated lysosomal membrane protein (404 aa).

The signal sequence occupies residues 1 to 26 (MSGYEKPSRGWGFCALSPVLLSLLMA). Residues 27–370 (APLGLLGEET…VDALSPLVLG (344 aa)) are Lumenal-facing. Residues asparagine 63, asparagine 132, asparagine 157, asparagine 185, and asparagine 228 are each glycosylated (N-linked (GlcNAc...) asparagine). The helical transmembrane segment at 371-391 (IMAVALGAPALMLLAGGLFLL) threads the bilayer. Topologically, residues 392 to 404 (LGRKRDSEYQSIN) are cytoplasmic. A Lysosomal targeting motif motif is present at residues 400–404 (YQSIN).

Belongs to the GLMP family. In terms of assembly, interacts (via lumenal domain) with lysosomal protein MFSD1; the interaction starts while both proteins are still in the endoplasmic reticulum and is required for stabilization of MFSD1 in lysosomes but has no direct effect on its targeting to lysosomes or transporter activity. In terms of processing, highly N-glycosylated. N-glycosylation is essential for GLMP stability and for MFSD1 lysosomal localization.

The protein resides in the lysosome membrane. In terms of biological role, required to protect lysosomal transporter MFSD1 from lysosomal proteolysis and for MFSD1 lysosomal localization. This Bos taurus (Bovine) protein is Glycosylated lysosomal membrane protein.